The sequence spans 353 residues: tRNA pseudouridine synthase B (353 aa).

D39 functions as the Nucleophile in the catalytic mechanism.

The protein belongs to the pseudouridine synthase TruB family. Type 1 subfamily.

It catalyses the reaction uridine(55) in tRNA = pseudouridine(55) in tRNA. Its function is as follows. Responsible for synthesis of pseudouridine from uracil-55 in the psi GC loop of transfer RNAs. This is tRNA pseudouridine synthase B from Wolbachia pipientis subsp. Culex pipiens (strain wPip).